Reading from the N-terminus, the 184-residue chain is ATP synthase subunit b, chloroplastic (184 aa).

The helical transmembrane segment at 27-49 (LATNPINLSVVFGVLIFFGKGVL) threads the bilayer.

The protein belongs to the ATPase B chain family. As to quaternary structure, F-type ATPases have 2 components, F(1) - the catalytic core - and F(0) - the membrane proton channel. F(1) has five subunits: alpha(3), beta(3), gamma(1), delta(1), epsilon(1). F(0) has four main subunits: a(1), b(1), b'(1) and c(10-14). The alpha and beta chains form an alternating ring which encloses part of the gamma chain. F(1) is attached to F(0) by a central stalk formed by the gamma and epsilon chains, while a peripheral stalk is formed by the delta, b and b' chains.

It is found in the plastid. The protein resides in the chloroplast thylakoid membrane. In terms of biological role, f(1)F(0) ATP synthase produces ATP from ADP in the presence of a proton or sodium gradient. F-type ATPases consist of two structural domains, F(1) containing the extramembraneous catalytic core and F(0) containing the membrane proton channel, linked together by a central stalk and a peripheral stalk. During catalysis, ATP synthesis in the catalytic domain of F(1) is coupled via a rotary mechanism of the central stalk subunits to proton translocation. Component of the F(0) channel, it forms part of the peripheral stalk, linking F(1) to F(0). The chain is ATP synthase subunit b, chloroplastic from Arabis hirsuta (Hairy rock-cress).